A 555-amino-acid polypeptide reads, in one-letter code: Protein tyrosine phosphatase-like protein egg-3 (555 aa).

2 short sequence motifs (D-box) span residues 96-99 and 130-133; these read RILL and RDRL. One can recognise a Tyrosine-protein phosphatase domain in the interval 207–514; the sequence is FVQEFNRLDR…LFIYRVILRW (308 aa). Positions 253–256 match the RXXL motif; required for cortical localization motif; that stretch reads RVKL. The RXXL motif motif lies at 266 to 269; sequence RNEL. 2 short sequence motifs (RXXL motif; required for cortical localization) span residues 509 to 512 and 525 to 528; these read RVIL and RAAL.

Belongs to the protein-tyrosine phosphatase family. As to quaternary structure, part of a complex, consisting of pseudophosphatases egg-3, egg-4, egg-5 and kinase mbk-2; this complex is required for the oocyte-to-zygote transition. Interacts (via tyrosine-protein phosphatase domain) with kinase mbk-2 (via N-terminus); the interaction does not affect mbk-2 kinase activity, is enhanced by mbk-2 tyrosine phosphorylation status and requires prior binding of mbk-2 to egg-4 and egg-5. Interacts with egg-4.

It is found in the cytoplasm. Its subcellular location is the cell cortex. Functionally, probable pseudophosphatase required for the oocyte-to-zygote transition during which it regulates the polarized dispersal of the cortical actin cytoskeleton, the synthesis of the eggshell chitin layer and the formation of the polar bodies after meiosis I and II. Acts as a scaffold to tether kinase mbk-2 and pseudophosphatases egg-4 and egg-5 to the oocyte cortex and thus restricts mbk-2 activity to the cortex during meiosis I. Regulates mbk-2 localization to cytoplasmic foci during meiosis II. Also required for chitin synthase chs-1 localization to the cell cortex of unfertilized oocytes and to cytoplasmic foci in the fertilized embryo. This is Protein tyrosine phosphatase-like protein egg-3 from Caenorhabditis elegans.